A 373-amino-acid polypeptide reads, in one-letter code: Capsular polysaccharide phosphotransferase (373 aa).

It belongs to the stealth family.

Its function is as follows. Part of a capsule gene locus. Expression was not detected under standard growth conditions. The sequence is that of Capsular polysaccharide phosphotransferase from Neisseria meningitidis serogroup B.